Consider the following 356-residue polypeptide: Dihydroorotate dehydrogenase (quinone) (356 aa).

Residues 67–71 (AGFDK) and Thr91 each bind FMN. Residue Lys71 coordinates substrate. A substrate-binding site is contributed by 116 to 120 (NRMGF). Residues Asn153 and Asn186 each contribute to the FMN site. Residue Asn186 coordinates substrate. The active-site Nucleophile is the Ser189. Residue Asn191 coordinates substrate. Positions 228 and 256 each coordinate FMN. Residue 257-258 (NT) coordinates substrate. Residues Gly282, Gly311, and 332 to 333 (YT) contribute to the FMN site.

Belongs to the dihydroorotate dehydrogenase family. Type 2 subfamily. Monomer. Requires FMN as cofactor.

It localises to the cell membrane. The catalysed reaction is (S)-dihydroorotate + a quinone = orotate + a quinol. It participates in pyrimidine metabolism; UMP biosynthesis via de novo pathway; orotate from (S)-dihydroorotate (quinone route): step 1/1. In terms of biological role, catalyzes the conversion of dihydroorotate to orotate with quinone as electron acceptor. This is Dihydroorotate dehydrogenase (quinone) from Pseudarthrobacter chlorophenolicus (strain ATCC 700700 / DSM 12829 / CIP 107037 / JCM 12360 / KCTC 9906 / NCIMB 13794 / A6) (Arthrobacter chlorophenolicus).